Here is a 72-residue protein sequence, read N- to C-terminus: Guanine nucleotide-binding protein G(I)/G(S)/G(O) subunit gamma-12 (72 aa).

The residue at position 2 (Ser2) is an N-acetylserine. Residues Ser10 and Ser26 each carry the phosphoserine modification. Tyr42 bears the Phosphotyrosine mark. Ser49 is subject to Phosphoserine. Cys69 bears the Cysteine methyl ester mark. Cys69 carries the S-geranylgeranyl cysteine lipid modification. The propeptide at 70-72 (IIL) is removed in mature form.

The protein belongs to the G protein gamma family. G proteins are composed of 3 units, alpha, beta and gamma.

The protein localises to the cell membrane. Functionally, guanine nucleotide-binding proteins (G proteins) are involved as a modulator or transducer in various transmembrane signaling systems. The beta and gamma chains are required for the GTPase activity, for replacement of GDP by GTP, and for G protein-effector interaction. In Mus musculus (Mouse), this protein is Guanine nucleotide-binding protein G(I)/G(S)/G(O) subunit gamma-12 (Gng12).